Reading from the N-terminus, the 326-residue chain is Olfactory receptor 8A1 (326 aa).

Over 1-45 (MGFLSPMHPCRPPTQRRMAAGNHSTVTEFILKGLTKRADLQLPLF) the chain is Extracellular. Asparagine 22 is a glycosylation site (N-linked (GlcNAc...) asparagine). Residues 46–66 (LLFLGIYLVTIVGNLGMITLI) form a helical membrane-spanning segment. At 67–77 (CLNSQLHTPMY) the chain is on the cytoplasmic side. Residues 78 to 100 (YFLSNLSLMDLCYSSVITPKMLV) traverse the membrane as a helical segment. The Extracellular portion of the chain corresponds to 101-116 (NFVSEKNIISYAGCMS). Residues cysteine 114 and cysteine 195 are joined by a disulfide bond. The helical transmembrane segment at 117–137 (QLYFFLVFVIAECYMLTVMAY) threads the bilayer. Topologically, residues 138-150 (DRYVAICHPLLYN) are cytoplasmic. A helical transmembrane segment spans residues 151–171 (IIMSHHTCLLLVAVVYAIGLI). The Extracellular segment spans residues 172 to 222 (GSTIETGLMLKLPYCEHLISHYFCDILPLMKLSCSSTYDVEMTVFFSAGFN). A helical membrane pass occupies residues 223–243 (IIVTSLTVLVSYTFILSSILG). Residues 244 to 260 (ISTTEGRSKAFSTCSSH) are Cytoplasmic-facing. A helical transmembrane segment spans residues 261-281 (LAAVGMFYGSTAFMYLKPSTI). The Extracellular segment spans residues 282–287 (SSLTQE). A helical membrane pass occupies residues 288–308 (NVASVFYTTVIPMLNPLIYSL). At 309 to 326 (RNKEVKAAVQKTLRGKLF) the chain is on the cytoplasmic side.

Belongs to the G-protein coupled receptor 1 family.

It is found in the cell membrane. Odorant receptor. This Homo sapiens (Human) protein is Olfactory receptor 8A1 (OR8A1).